The primary structure comprises 418 residues: Somatostatin receptor type 3 (418 aa).

A disordered region spans residues M1 to A21. The Extracellular segment spans residues M1–S43. Polar residues predominate over residues S7–S20. 2 N-linked (GlcNAc...) asparagine glycosylation sites follow: N17 and N30. A helical membrane pass occupies residues G44–V69. Over L70–T79 the chain is Cytoplasmic. The helical transmembrane segment at N80–A101 threads the bilayer. The Extracellular portion of the chain corresponds to A102–C116. Residues C116 and C191 are joined by a disulfide bond. A helical membrane pass occupies residues R117–S138. Residues V139 to R161 are Cytoplasmic-facing. Residues T162–F181 form a helical membrane-spanning segment. The Extracellular portion of the chain corresponds to S182–G205. The helical transmembrane segment at F206 to V231 threads the bilayer. Over K232–R257 the chain is Cytoplasmic. A helical membrane pass occupies residues M258–V279. Residues N280–G293 lie on the Extracellular side of the membrane. The chain crosses the membrane as a helical span at residues L294 to L316. Residues S317–L418 are Cytoplasmic-facing. A phosphoserine mark is found at S332 and S337. The tract at residues V335–L418 is disordered. T348 carries the post-translational modification Phosphothreonine. A compositionally biased stretch (acidic residues) spans T348–E360. Over residues S361–N371 the composition is skewed to basic and acidic residues. Composition is skewed to polar residues over residues R373–Q385 and K395–L418.

Belongs to the G-protein coupled receptor 1 family. In terms of assembly, homodimer and heterodimer with SSTR2. Heterodimerization with SSTR2 inactivates SSTR3 receptor function. In terms of processing, phosphorylated. Phosphorylation increases upon somatostatin binding. In terms of tissue distribution, brain, pituitary and pancreas.

The protein localises to the cell membrane. In terms of biological role, receptor for somatostatin-14 and -28. This receptor is coupled via pertussis toxin sensitive G proteins to inhibition of adenylyl cyclase. This chain is Somatostatin receptor type 3 (SSTR3), found in Homo sapiens (Human).